We begin with the raw amino-acid sequence, 55 residues long: Eclosion hormone (55 aa).

It belongs to the insect eclosion hormone family.

The protein localises to the secreted. Neuropeptide that triggers the performance of ecdysis behaviors at the end of a molt. It triggers adult behavior patterns: larval, pupal and adult ecdysis, and plasticization during the molt. In Romalea microptera (Eastern lubber grasshopper), this protein is Eclosion hormone.